We begin with the raw amino-acid sequence, 159 residues long: Protransforming growth factor alpha (159 aa).

A signal peptide spans 1–23 (MVPATGQLALLALGILLAVCQAL). Positions 24-38 (ENSTSPLSDSPVAAA) are cleaved as a propeptide — removed in mature form. The Extracellular segment spans residues 24-97 (ENSTSPLSDS…AVVAASQKKQ (74 aa)). A glycan (N-linked (GlcNAc...) asparagine) is linked at asparagine 25. The 40-residue stretch at 44–83 (NKCPDSHTQYCFHGTCRFLVQEEKPACVCHSGYVGVRCEH) folds into the EGF-like domain. 3 disulfide bridges follow: cysteine 46-cysteine 59, cysteine 54-cysteine 70, and cysteine 72-cysteine 81. Residues 89–159 (VVAASQKKQA…TACCHSETVV (71 aa)) constitute a propeptide, removed in mature form. Residues 98–123 (AITALVVVSIVALAVLIITCVLIHCC) traverse the membrane as a helical segment. Residues 124–159 (QLRKHCEWCRALVCRHEKPSALLKGRTACCHSETVV) are Cytoplasmic-facing. 2 S-palmitoyl cysteine lipidation sites follow: cysteine 152 and cysteine 153.

As to quaternary structure, interacts with the PDZ domains of SDCBP and SNTA1. The interaction with SDCBP, is required for the targeting to the cell surface. In the endoplasmic reticulum, in its immature form (i.e. with a prosegment and lacking full N-glycosylation), interacts with CNIH. In the Golgi apparatus, may form a complex with CNIH and GORASP2. Interacts (via cytoplasmic C-terminal domain) with NKD2. Interacts with MAGI3.

It is found in the secreted. The protein resides in the extracellular space. Its subcellular location is the cell membrane. Its function is as follows. TGF alpha is a mitogenic polypeptide that is able to bind to the EGF receptor/EGFR and to act synergistically with TGF beta to promote anchorage-independent cell proliferation in soft agar. This is Protransforming growth factor alpha (Tgfa) from Mus musculus (Mouse).